We begin with the raw amino-acid sequence, 160 residues long: Major strawberry allergen Fra a 1.08 (160 aa).

The protein belongs to the BetVI family. Phosphorylated in vivo. Phosphorylation prevents its activity as ribonuclease. In terms of tissue distribution, highly expressed in roots. Expressed a low levels in ripe red fruits.

Functionally, possesses ribonuclease activity in vitro. The protein is Major strawberry allergen Fra a 1.08 of Fragaria ananassa (Strawberry).